The primary structure comprises 119 residues: MNLENYLPVILFILVGVGVGVAPQVLGFLLGPRRPYAAKNSPYECGFEAFEDARMKFDVRYYLVAILFILFDLEIAFLFPWAVSLREIGATGFWAMMIFLGILVVGFVYEWKKGALDWE.

3 helical membrane-spanning segments follow: residues 9-29 (VILF…LGFL), 63-83 (LVAI…PWAV), and 88-108 (IGAT…VGFV).

Belongs to the complex I subunit 3 family. In terms of assembly, NDH-1 is composed of 14 different subunits. Subunits NuoA, H, J, K, L, M, N constitute the membrane sector of the complex.

Its subcellular location is the cell inner membrane. The enzyme catalyses a quinone + NADH + 5 H(+)(in) = a quinol + NAD(+) + 4 H(+)(out). In terms of biological role, NDH-1 shuttles electrons from NADH, via FMN and iron-sulfur (Fe-S) centers, to quinones in the respiratory chain. The immediate electron acceptor for the enzyme in this species is believed to be ubiquinone. Couples the redox reaction to proton translocation (for every two electrons transferred, four hydrogen ions are translocated across the cytoplasmic membrane), and thus conserves the redox energy in a proton gradient. The chain is NADH-quinone oxidoreductase subunit A from Leptothrix cholodnii (strain ATCC 51168 / LMG 8142 / SP-6) (Leptothrix discophora (strain SP-6)).